The primary structure comprises 373 residues: MPLPDFHSSDPFTLGIELELQVVNPPGYDLSQDSSALIAAVKNDIKAGEVKHDITESMLEIATGVCQNIDQAAAQFSAMQQAILRAAGDQHIQIAGGGTHPFQKWQRQEVCDDERYNHNLELFGYLILQATVFGQHVHVGCRNGDDAIYLLHGLSRFVPHFIALSASSPYMQGSDTKFASSRLNIFSGFPDNGKMPWVSNWQGFEGLFRRLSYTSMIDTIKDVHWDIRPSPHFGTVEVRVMDTPLTLAHAINIAGLIQATAHWLLTERPYKHQEQDYLLYKFNRFQACRYGLDGLLTDVNTGEQKTIAEDMKWLLDRVAPSAEKLGGASAIAEIALMLKQGKSEAQRMRDFIADGGSLISLVQKHCELWATHP.

This sequence belongs to the glutamate--cysteine ligase type 2 family. YbdK subfamily. As to quaternary structure, homodimer.

The enzyme catalyses L-cysteine + L-glutamate + ATP = gamma-L-glutamyl-L-cysteine + ADP + phosphate + H(+). Functionally, ATP-dependent carboxylate-amine ligase which exhibits weak glutamate--cysteine ligase activity. The chain is Putative glutamate--cysteine ligase 2 from Enterobacter sp. (strain 638).